Here is a 101-residue protein sequence, read N- to C-terminus: MNQELRIRLESYDHRLLDDTVKTIVNISNSTGSKLRGPIPLPTKKEIFTILRSPHVNKSSREQFERRTHKRLIILENPQPKTMEALKRLSVPFGVEVTFKI.

The protein belongs to the universal ribosomal protein uS10 family. As to quaternary structure, part of the 30S ribosomal subunit.

Functionally, involved in the binding of tRNA to the ribosomes. The protein is Small ribosomal subunit protein uS10 of Ureaplasma parvum serovar 3 (strain ATCC 27815 / 27 / NCTC 11736).